The chain runs to 320 residues: Chitinase 3 (320 aa).

An N-terminal signal peptide occupies residues 1 to 18 (MRALALAVVAMAVVAVRG). A Chitin-binding type-1 domain is found at 19–59 (EQCGSQAGGALCPNCLCCSQYGWCGSTSDYCGAGCQSQCSG). 8 disulfides stabilise this stretch: C21-C36, C30-C42, C33-C61, C35-C49, C53-C57, C97-C159, C172-C180, and C279-C311. E141 (proton donor) is an active-site residue.

Belongs to the glycosyl hydrolase 19 family. Chitinase class I subfamily. Expressed at low levels in roots, leaves, sheaths and meristems.

It carries out the reaction Random endo-hydrolysis of N-acetyl-beta-D-glucosaminide (1-&gt;4)-beta-linkages in chitin and chitodextrins.. Hydrolyzes chitin and plays a role in defense against fungal pathogens containing chitin. Inhibits the growth of T.reesei fungus on plate assay. The sequence is that of Chitinase 3 (Cht3) from Oryza sativa subsp. japonica (Rice).